The sequence spans 151 residues: Deoxyuridine 5'-triphosphate nucleotidohydrolase (151 aa).

Substrate-binding positions include 70 to 72 (RSG), asparagine 83, 87 to 89 (LID), and methionine 97.

This sequence belongs to the dUTPase family. Mg(2+) serves as cofactor.

It catalyses the reaction dUTP + H2O = dUMP + diphosphate + H(+). It participates in pyrimidine metabolism; dUMP biosynthesis; dUMP from dCTP (dUTP route): step 2/2. This enzyme is involved in nucleotide metabolism: it produces dUMP, the immediate precursor of thymidine nucleotides and it decreases the intracellular concentration of dUTP so that uracil cannot be incorporated into DNA. This Yersinia pseudotuberculosis serotype O:1b (strain IP 31758) protein is Deoxyuridine 5'-triphosphate nucleotidohydrolase.